Here is a 1200-residue protein sequence, read N- to C-terminus: PAN2-PAN3 deadenylation complex catalytic subunit Pan2 (1200 aa).

WD repeat units follow at residues 153 to 193 (DENE…QKYA), 195 to 231 (ETPGVTIMRQTNRFFFCGHTSGKVSLRDLRSFKVEHE), 244 to 280 (VHGNLLAACGFSSRLTGLACDRFLKVYDLRMMRAITP), and 328 to 367 (PVGPLLMTFDVSASKQALAFGDSEGCVHLWTDSPEPSFNP). Residues 368 to 484 (YSRETEFALP…PTGREEEPLH (117 aa)) are linker. The USP domain occupies 485–923 (TVSKKYRKVT…VPAILYYVKR (439 aa)). At Ser784 the chain carries Phosphoserine. Residues 974–1146 (VGLDAEFVTL…EDARTALQLY (173 aa)) enclose the Exonuclease domain. A divalent metal cation contacts are provided by Asp977, Glu979, Asp1086, and Asp1138. Ser1188 is subject to Phosphoserine.

Belongs to the peptidase C19 family. PAN2 subfamily. As to quaternary structure, forms a heterotrimer with an asymmetric homodimer of the regulatory subunit PAN3 to form the poly(A)-nuclease (PAN) deadenylation complex. Interacts with PAN3 isoform 1/Pan3L and isoform 3/Pan3S. Interacts with ZFP36. A divalent metal cation is required as a cofactor.

It is found in the cytoplasm. Its subcellular location is the P-body. It localises to the nucleus. The catalysed reaction is Exonucleolytic cleavage of poly(A) to 5'-AMP.. Its activity is regulated as follows. Positively regulated by the regulatory subunit PAN3. In terms of biological role, catalytic subunit of the poly(A)-nuclease (PAN) deadenylation complex, one of two cytoplasmic mRNA deadenylases involved in general and miRNA-mediated mRNA turnover. PAN specifically shortens poly(A) tails of RNA and the activity is stimulated by poly(A)-binding protein (PABP). PAN deadenylation is followed by rapid degradation of the shortened mRNA tails by the CCR4-NOT complex. Deadenylated mRNAs are then degraded by two alternative mechanisms, namely exosome-mediated 3'-5' exonucleolytic degradation, or deadenylation-dependent mRNA decaping and subsequent 5'-3' exonucleolytic degradation by XRN1. Also acts as an important regulator of the HIF1A-mediated hypoxic response. Required for HIF1A mRNA stability independent of poly(A) tail length regulation. In Mus musculus (Mouse), this protein is PAN2-PAN3 deadenylation complex catalytic subunit Pan2.